Here is a 213-residue protein sequence, read N- to C-terminus: Adenylate kinase (213 aa).

14–19 is an ATP binding site; sequence GSGKGT. The interval 34–63 is NMP; the sequence is SSGNLLRSAIKASTPLGIKASEYIDEGQLV. AMP contacts are provided by residues S35, R40, 61–63, 89–92, and Q96; these read QLV and GFPR. Residues 129–162 are LID; that stretch reads SRFICPSCNFVYNQSQGFRECPTCHSELVRRSDD. R130 lines the ATP pocket. The Zn(2+) site is built by C133 and C136. Residue 139 to 140 participates in ATP binding; that stretch reads VY. C149 and C152 together coordinate Zn(2+). 2 residues coordinate AMP: R159 and R170. Residue K198 coordinates ATP.

The protein belongs to the adenylate kinase family. In terms of assembly, monomer.

The protein resides in the cytoplasm. It carries out the reaction AMP + ATP = 2 ADP. It functions in the pathway purine metabolism; AMP biosynthesis via salvage pathway; AMP from ADP: step 1/1. In terms of biological role, catalyzes the reversible transfer of the terminal phosphate group between ATP and AMP. Plays an important role in cellular energy homeostasis and in adenine nucleotide metabolism. The sequence is that of Adenylate kinase from Chlamydia felis (strain Fe/C-56) (Chlamydophila felis).